Here is a 323-residue protein sequence, read N- to C-terminus: Methionyl-tRNA formyltransferase (323 aa).

A (6S)-5,6,7,8-tetrahydrofolate-binding site is contributed by serine 113–proline 116.

Belongs to the Fmt family.

It catalyses the reaction L-methionyl-tRNA(fMet) + (6R)-10-formyltetrahydrofolate = N-formyl-L-methionyl-tRNA(fMet) + (6S)-5,6,7,8-tetrahydrofolate + H(+). In terms of biological role, attaches a formyl group to the free amino group of methionyl-tRNA(fMet). The formyl group appears to play a dual role in the initiator identity of N-formylmethionyl-tRNA by promoting its recognition by IF2 and preventing the misappropriation of this tRNA by the elongation apparatus. This is Methionyl-tRNA formyltransferase from Porphyromonas gingivalis (strain ATCC BAA-308 / W83).